We begin with the raw amino-acid sequence, 166 residues long: Putative tRNA (cytidine(34)-2'-O)-methyltransferase (166 aa).

S-adenosyl-L-methionine-binding residues include Leu-83, Gly-109, Ile-130, and Ser-138.

Belongs to the class IV-like SAM-binding methyltransferase superfamily. RNA methyltransferase TrmH family. TrmL subfamily.

It localises to the cytoplasm. The enzyme catalyses cytidine(34) in tRNA + S-adenosyl-L-methionine = 2'-O-methylcytidine(34) in tRNA + S-adenosyl-L-homocysteine + H(+). It catalyses the reaction 5-carboxymethylaminomethyluridine(34) in tRNA(Leu) + S-adenosyl-L-methionine = 5-carboxymethylaminomethyl-2'-O-methyluridine(34) in tRNA(Leu) + S-adenosyl-L-homocysteine + H(+). In terms of biological role, could methylate the ribose at the nucleotide 34 wobble position in tRNA. This is Putative tRNA (cytidine(34)-2'-O)-methyltransferase from Mycoplasma genitalium (strain ATCC 33530 / DSM 19775 / NCTC 10195 / G37) (Mycoplasmoides genitalium).